Here is a 264-residue protein sequence, read N- to C-terminus: Thiazole synthase (264 aa).

Lys106 (schiff-base intermediate with DXP) is an active-site residue. Residues Gly167, 193–194 (AG), and 215–216 (NS) each bind 1-deoxy-D-xylulose 5-phosphate.

It belongs to the ThiG family. In terms of assembly, homotetramer. Forms heterodimers with either ThiH or ThiS.

Its subcellular location is the cytoplasm. It catalyses the reaction [ThiS sulfur-carrier protein]-C-terminal-Gly-aminoethanethioate + 2-iminoacetate + 1-deoxy-D-xylulose 5-phosphate = [ThiS sulfur-carrier protein]-C-terminal Gly-Gly + 2-[(2R,5Z)-2-carboxy-4-methylthiazol-5(2H)-ylidene]ethyl phosphate + 2 H2O + H(+). It participates in cofactor biosynthesis; thiamine diphosphate biosynthesis. In terms of biological role, catalyzes the rearrangement of 1-deoxy-D-xylulose 5-phosphate (DXP) to produce the thiazole phosphate moiety of thiamine. Sulfur is provided by the thiocarboxylate moiety of the carrier protein ThiS. In vitro, sulfur can be provided by H(2)S. The sequence is that of Thiazole synthase from Pseudomonas fluorescens (strain Pf0-1).